A 139-amino-acid chain; its full sequence is Thioredoxin 2 (139 aa).

A zinc finger spans residues 5–18; it reads CTHCQAINRIPDDR. A Thioredoxin domain is found at 26–139; sequence GRCGHDLFDG…PFDSWLNESL (114 aa). Cys-64 and Cys-67 form a disulfide bridge.

The protein belongs to the thioredoxin family.

The protein resides in the cytoplasm. It carries out the reaction [protein]-dithiol + NAD(+) = [protein]-disulfide + NADH + H(+). It catalyses the reaction [protein]-dithiol + NADP(+) = [protein]-disulfide + NADPH + H(+). In terms of biological role, efficient electron donor for the essential enzyme ribonucleotide reductase. Is also able to reduce the interchain disulfide bridges of insulin. The protein is Thioredoxin 2 (trxC) of Escherichia coli O6:H1 (strain CFT073 / ATCC 700928 / UPEC).